The chain runs to 146 residues: UPF0260 protein Ssed_2516 (146 aa).

It belongs to the UPF0260 family.

This is UPF0260 protein Ssed_2516 from Shewanella sediminis (strain HAW-EB3).